Reading from the N-terminus, the 157-residue chain is Large ribosomal subunit protein uL22 (157 aa).

This sequence belongs to the universal ribosomal protein uL22 family. As to quaternary structure, part of the 50S ribosomal subunit.

Functionally, this protein binds specifically to 23S rRNA. It makes multiple contacts with different domains of the 23S rRNA in the assembled 50S subunit and ribosome. The globular domain of the protein is located near the polypeptide exit tunnel on the outside of the subunit, while an extended beta-hairpin is found that lines the wall of the exit tunnel in the center of the 70S ribosome. The sequence is that of Large ribosomal subunit protein uL22 from Staphylothermus marinus (strain ATCC 43588 / DSM 3639 / JCM 9404 / F1).